Here is an 842-residue protein sequence, read N- to C-terminus: Translation initiation factor IF-2 (842 aa).

Residues 121–144 form a disordered region; sequence TESTSVEKSESDDVTLEEESSKKV. In terms of domain architecture, tr-type G spans 340–510; it reads PRAPVVTVMG…LLMAELLELK (171 aa). Positions 349–356 are G1; that stretch reads GHVDHGKT. Position 349–356 (349–356) interacts with GTP; that stretch reads GHVDHGKT. The interval 374 to 378 is G2; sequence GITQH. Residues 396 to 399 form a G3 region; sequence DTPG. GTP contacts are provided by residues 396–400 and 450–453; these read DTPGH and NKID. The G4 stretch occupies residues 450 to 453; it reads NKID. The interval 486–488 is G5; that stretch reads SAK.

The protein belongs to the TRAFAC class translation factor GTPase superfamily. Classic translation factor GTPase family. IF-2 subfamily.

Its subcellular location is the cytoplasm. One of the essential components for the initiation of protein synthesis. Protects formylmethionyl-tRNA from spontaneous hydrolysis and promotes its binding to the 30S ribosomal subunits. Also involved in the hydrolysis of GTP during the formation of the 70S ribosomal complex. The sequence is that of Translation initiation factor IF-2 from Ehrlichia chaffeensis (strain ATCC CRL-10679 / Arkansas).